Reading from the N-terminus, the 515-residue chain is 1-pyrroline-5-carboxylate dehydrogenase 1 (515 aa).

Residues Glu286 and Cys320 contribute to the active site.

This sequence belongs to the aldehyde dehydrogenase family. RocA subfamily.

The catalysed reaction is L-glutamate 5-semialdehyde + NAD(+) + H2O = L-glutamate + NADH + 2 H(+). It functions in the pathway amino-acid degradation; L-proline degradation into L-glutamate; L-glutamate from L-proline: step 2/2. In Halalkalibacterium halodurans (strain ATCC BAA-125 / DSM 18197 / FERM 7344 / JCM 9153 / C-125) (Bacillus halodurans), this protein is 1-pyrroline-5-carboxylate dehydrogenase 1 (rocA1).